The sequence spans 187 residues: ATP synthase subunit b 2 (187 aa).

The chain crosses the membrane as a helical span at residues 32-52 (TTFAAQILWLAIAFGLLYYLM).

The protein belongs to the ATPase B chain family. As to quaternary structure, F-type ATPases have 2 components, F(1) - the catalytic core - and F(0) - the membrane proton channel. F(1) has five subunits: alpha(3), beta(3), gamma(1), delta(1), epsilon(1). F(0) has three main subunits: a(1), b(2) and c(10-14). The alpha and beta chains form an alternating ring which encloses part of the gamma chain. F(1) is attached to F(0) by a central stalk formed by the gamma and epsilon chains, while a peripheral stalk is formed by the delta and b chains.

It localises to the cell inner membrane. Its function is as follows. F(1)F(0) ATP synthase produces ATP from ADP in the presence of a proton or sodium gradient. F-type ATPases consist of two structural domains, F(1) containing the extramembraneous catalytic core and F(0) containing the membrane proton channel, linked together by a central stalk and a peripheral stalk. During catalysis, ATP synthesis in the catalytic domain of F(1) is coupled via a rotary mechanism of the central stalk subunits to proton translocation. In terms of biological role, component of the F(0) channel, it forms part of the peripheral stalk, linking F(1) to F(0). The b'-subunit is a diverged and duplicated form of b found in plants and photosynthetic bacteria. The polypeptide is ATP synthase subunit b 2 (atpF2) (Methylobacterium sp. (strain 4-46)).